Consider the following 179-residue polypeptide: Large ribosomal subunit protein uL5 (179 aa).

This sequence belongs to the universal ribosomal protein uL5 family. In terms of assembly, part of the 50S ribosomal subunit; part of the 5S rRNA/L5/L18/L25 subcomplex. Contacts the 5S rRNA and the P site tRNA. Forms a bridge to the 30S subunit in the 70S ribosome.

This is one of the proteins that bind and probably mediate the attachment of the 5S RNA into the large ribosomal subunit, where it forms part of the central protuberance. In the 70S ribosome it contacts protein S13 of the 30S subunit (bridge B1b), connecting the 2 subunits; this bridge is implicated in subunit movement. Contacts the P site tRNA; the 5S rRNA and some of its associated proteins might help stabilize positioning of ribosome-bound tRNAs. The sequence is that of Large ribosomal subunit protein uL5 from Methylococcus capsulatus (strain ATCC 33009 / NCIMB 11132 / Bath).